The following is a 91-amino-acid chain: DNA-directed RNA polymerase subunit omega (91 aa).

This sequence belongs to the RNA polymerase subunit omega family. As to quaternary structure, the RNAP catalytic core consists of 2 alpha, 1 beta, 1 beta' and 1 omega subunit. When a sigma factor is associated with the core the holoenzyme is formed, which can initiate transcription.

It catalyses the reaction RNA(n) + a ribonucleoside 5'-triphosphate = RNA(n+1) + diphosphate. Functionally, promotes RNA polymerase assembly. Latches the N- and C-terminal regions of the beta' subunit thereby facilitating its interaction with the beta and alpha subunits. This is DNA-directed RNA polymerase subunit omega from Erwinia tasmaniensis (strain DSM 17950 / CFBP 7177 / CIP 109463 / NCPPB 4357 / Et1/99).